The sequence spans 352 residues: Protein RecA (352 aa).

68–75 lines the ATP pocket; that stretch reads GPESSGKT.

It belongs to the RecA family.

It is found in the cytoplasm. Can catalyze the hydrolysis of ATP in the presence of single-stranded DNA, the ATP-dependent uptake of single-stranded DNA by duplex DNA, and the ATP-dependent hybridization of homologous single-stranded DNAs. It interacts with LexA causing its activation and leading to its autocatalytic cleavage. This chain is Protein RecA, found in Clostridium perfringens (strain SM101 / Type A).